Consider the following 152-residue polypeptide: Small ribosomal subunit protein uS15 (152 aa).

Residues 1-10 are compositionally biased toward basic residues; sequence MARMYARRRG. Residues 1-24 are disordered; sequence MARMYARRRGTSSSVRPYRKEAPE.

Belongs to the universal ribosomal protein uS15 family. Part of the 30S ribosomal subunit.

This chain is Small ribosomal subunit protein uS15, found in Methanoculleus marisnigri (strain ATCC 35101 / DSM 1498 / JR1).